The following is a 494-amino-acid chain: Probable malate:quinone oxidoreductase (494 aa).

It belongs to the MQO family. Requires FAD as cofactor.

The enzyme catalyses (S)-malate + a quinone = a quinol + oxaloacetate. It participates in carbohydrate metabolism; tricarboxylic acid cycle; oxaloacetate from (S)-malate (quinone route): step 1/1. The polypeptide is Probable malate:quinone oxidoreductase (Micrococcus luteus (strain ATCC 4698 / DSM 20030 / JCM 1464 / CCM 169 / CCUG 5858 / IAM 1056 / NBRC 3333 / NCIMB 9278 / NCTC 2665 / VKM Ac-2230) (Micrococcus lysodeikticus)).